The sequence spans 1052 residues: RTX-III toxin determinant A from serotype 8 (1052 aa).

A run of 3 helical transmembrane segments spans residues 248–265 (GLDI…SFAL), 275–334 (KVAA…LRVA), and 372–418 (DASI…GILE). Hemolysin-type calcium-binding repeat units follow at residues 744–761 (KGSK…DDLL), 762–779 (NGND…NDEL), 780–797 (RGDN…NDKL), 798–815 (LGGN…NDEL), 826–843 (RGGK…SDLL), and 844–861 (DGGE…SDFY).

Belongs to the RTX prokaryotic toxin (TC 1.C.11) family. Post-translationally, palmitoylated by ApxIIIC. The toxin only becomes active when modified.

The protein localises to the secreted. Its subcellular location is the host cell membrane. Does not have hemolytic activity but shows a strong cytotoxicity towards alveolar macrophages and neutrophils. In Actinobacillus pleuropneumoniae (Haemophilus pleuropneumoniae), this protein is RTX-III toxin determinant A from serotype 8 (apxIIIA).